The chain runs to 105 residues: Unclassified hydrophobin D (105 aa).

Residues Met-1–Ala-18 form the signal peptide. Disulfide bonds link Cys-35–Cys-86, Cys-42–Cys-83, and Cys-43–Cys-49.

It localises to the secreted. It is found in the cell wall. In terms of biological role, aerial growth, conidiation, and dispersal of filamentous fungi in the environment rely upon a capability of their secreting small amphipathic proteins called hydrophobins (HPBs) with low sequence identity. Class I can self-assemble into an outermost layer of rodlet bundles on aerial cell surfaces, conferring cellular hydrophobicity that supports fungal growth, development and dispersal; whereas Class II form highly ordered films at water-air interfaces through intermolecular interactions but contribute nothing to the rodlet structure. In P.expansum, hydrophobins contribute to germination, tolerance to cold stress and mycotoxins patulin and citrinin production. This is Unclassified hydrophobin D from Penicillium expansum (Blue mold rot fungus).